The chain runs to 2698 residues: Zinc finger protein 292 (2698 aa).

The C2H2-type 1 zinc finger occupies 567–589 (YSCPICAKNFNSKDSFVPHVTLH). At Ser-654 the chain carries Phosphoserine. C2H2-type zinc fingers lie at residues 681-705 (FNCP…VKGH), 722-744 (VICQ…LQMH), 750-774 (YICI…RKEH), 779-803 (AKCL…EAQH), 807-831 (YTCK…QDGH), and 1085-1110 (FSCQ…KTAH). Residues 822 to 834 (SEMEKHQDGHSHP) are compositionally biased toward basic and acidic residues. The interval 822-894 (SEMEKHQDGH…AEPAVTKHGQ (73 aa)) is disordered. Position 1104 is an N6-acetyllysine (Lys-1104). Residue Ser-1146 is modified to Phosphoserine. Polar residues predominate over residues 1278–1325 (NSTNHYPSQTDGNINSSFLKGGSSENGVFPSQVSSADDFSSTSAQPST). A disordered region spans residues 1278 to 1349 (NSTNHYPSQT…KERKPKHNKR (72 aa)). The segment at 1361-1383 (FICSRCYRAFTNPRSLGGHLSKR) adopts a C2H2-type 8; degenerate zinc-finger fold. Polar residues-rich tracts occupy residues 1574-1603 (FSSS…TRSS) and 1624-1633 (SVSNTSQNVL). The segment at 1574–1656 (FSSSTEPPQN…PVPDTNTRSD (83 aa)) is disordered. C2H2-type zinc fingers lie at residues 1879–1904 (FVCQ…GKIH) and 1924–1949 (FKCV…QLVH). The interval 1964 to 1997 (PYGRKSQSENLSSPQNNQVKKQPSMAEETKTESQ) is disordered. Positions 1971–1984 (SENLSSPQNNQVKK) are enriched in polar residues. Lys-2020 bears the N6-acetyllysine mark. Basic and acidic residues predominate over residues 2021 to 2032 (QLAEKKSPEKPE). The tract at residues 2021–2075 (QLAEKKSPEKPESSSQPVTSSAEQYNANLANLKTKGRKNKRHRKEKEEKREKNPV) is disordered. Residues 2038–2051 (VTSSAEQYNANLAN) show a composition bias toward polar residues. Residues 2054–2064 (TKGRKNKRHRK) are compositionally biased toward basic residues. 4 consecutive C2H2-type zinc fingers follow at residues 2091 to 2116 (YCCV…QAVH), 2149 to 2174 (FRCQ…MKLH), 2193 to 2218 (FPCD…EVDH), and 2233 to 2258 (YKCD…FNKH). Over residues 2262 to 2271 (HKAHLIRPRK) the composition is skewed to basic residues. Residues 2262–2323 (HKAHLIRPRK…KSNLENKSAK (62 aa)) are disordered. A C2H2-type 15 zinc finger spans residues 2362-2386 (YPCMIKGCTSVVTSESNIIRHYKCH). 3 disordered regions span residues 2411–2454 (GKEI…GEKD), 2467–2553 (LINE…EEHP), and 2580–2608 (KQKK…HVDK). Positions 2421 to 2437 (KNDKKDPDSSVLEKNDN) are enriched in basic and acidic residues. The span at 2470 to 2488 (EDSTNAENQGNTTLKGNNE) shows a compositional bias: polar residues. Basic and acidic residues-rich tracts occupy residues 2489 to 2501 (FQEH…ERQK) and 2580 to 2590 (KQKKNSDRDHS). Residues 2596 to 2606 (RGSHSSSRRHV) show a composition bias toward basic residues.

The protein belongs to the krueppel C2H2-type zinc-finger protein family. Expressed in postnatal day 1 (P1) pituitary. Also detected in presomatotrophic cell line GHFT1-5.

It localises to the nucleus. Functionally, may be involved in transcriptional regulation. The sequence is that of Zinc finger protein 292 from Mus musculus (Mouse).